We begin with the raw amino-acid sequence, 356 residues long: UDP-N-acetylglucosamine--N-acetylmuramyl-(pentapeptide) pyrophosphoryl-undecaprenol N-acetylglucosamine transferase (356 aa).

Residues 12–14 (TGG), Asn-124, Arg-163, Ser-188, Ile-242, 261–266 (ALTVSE), and Gln-287 each bind UDP-N-acetyl-alpha-D-glucosamine.

This sequence belongs to the glycosyltransferase 28 family. MurG subfamily.

The protein localises to the cell inner membrane. The enzyme catalyses di-trans,octa-cis-undecaprenyl diphospho-N-acetyl-alpha-D-muramoyl-L-alanyl-D-glutamyl-meso-2,6-diaminopimeloyl-D-alanyl-D-alanine + UDP-N-acetyl-alpha-D-glucosamine = di-trans,octa-cis-undecaprenyl diphospho-[N-acetyl-alpha-D-glucosaminyl-(1-&gt;4)]-N-acetyl-alpha-D-muramoyl-L-alanyl-D-glutamyl-meso-2,6-diaminopimeloyl-D-alanyl-D-alanine + UDP + H(+). The protein operates within cell wall biogenesis; peptidoglycan biosynthesis. In terms of biological role, cell wall formation. Catalyzes the transfer of a GlcNAc subunit on undecaprenyl-pyrophosphoryl-MurNAc-pentapeptide (lipid intermediate I) to form undecaprenyl-pyrophosphoryl-MurNAc-(pentapeptide)GlcNAc (lipid intermediate II). In Pseudomonas fluorescens (strain ATCC BAA-477 / NRRL B-23932 / Pf-5), this protein is UDP-N-acetylglucosamine--N-acetylmuramyl-(pentapeptide) pyrophosphoryl-undecaprenol N-acetylglucosamine transferase.